A 415-amino-acid polypeptide reads, in one-letter code: GPI mannosyltransferase 1 (415 aa).

The next 9 helical transmembrane spans lie at 8 to 28, 82 to 102, 134 to 154, 158 to 178, 222 to 242, 284 to 304, 329 to 349, 354 to 374, and 387 to 407; these read PSLV…YGAW, FFSF…WLIA, TRGS…WAVL, ITLA…PFVY, LLLT…MYIL, FESL…PIVL, SQYF…SSLM, LGIT…QQGY, and GLFL…GIII.

Belongs to the PIGM family.

The protein localises to the endoplasmic reticulum membrane. It participates in glycolipid biosynthesis; glycosylphosphatidylinositol-anchor biosynthesis. Functionally, mannosyltransferase involved in glycosylphosphatidylinositol-anchor biosynthesis. Transfers the first alpha-1,4-mannose to GlcN-acyl-PI during GPI precursor assembly. Required for cell wall integrity. The chain is GPI mannosyltransferase 1 (gpi14) from Aspergillus oryzae (strain ATCC 42149 / RIB 40) (Yellow koji mold).